The following is a 199-amino-acid chain: Large ribosomal subunit protein uL10 (199 aa).

It belongs to the universal ribosomal protein uL10 family. In terms of assembly, part of the ribosomal stalk of the 50S ribosomal subunit. The N-terminus interacts with L11 and the large rRNA to form the base of the stalk. The C-terminus forms an elongated spine to which L12 dimers bind in a sequential fashion forming a multimeric L10(L12)X complex.

In terms of biological role, forms part of the ribosomal stalk, playing a central role in the interaction of the ribosome with GTP-bound translation factors. The sequence is that of Large ribosomal subunit protein uL10 (rplJ) from Aquifex aeolicus (strain VF5).